Here is a 120-residue protein sequence, read N- to C-terminus: Large ribosomal subunit protein uL18 (120 aa).

It belongs to the universal ribosomal protein uL18 family. As to quaternary structure, part of the 50S ribosomal subunit; part of the 5S rRNA/L5/L18/L25 subcomplex. Contacts the 5S and 23S rRNAs.

This is one of the proteins that bind and probably mediate the attachment of the 5S RNA into the large ribosomal subunit, where it forms part of the central protuberance. The polypeptide is Large ribosomal subunit protein uL18 (Ehrlichia ruminantium (strain Gardel)).